The primary structure comprises 715 residues: Fatty acid oxidation complex subunit alpha (715 aa).

The segment at 1 to 190 (MIYEGKAITV…KVGAVDAVVA (190 aa)) is enoyl-CoA hydratase/isomerase. Aspartate 297 provides a ligand contact to substrate. The segment at 312–715 (HDVKQAAVLG…MAKNGQRFFN (404 aa)) is 3-hydroxyacyl-CoA dehydrogenase. NAD(+) is bound by residues methionine 325, aspartate 344, 401–403 (VVE), lysine 408, and serine 430. Histidine 451 acts as the For 3-hydroxyacyl-CoA dehydrogenase activity in catalysis. Asparagine 454 contacts NAD(+). Substrate is bound by residues asparagine 501 and tyrosine 660.

This sequence in the N-terminal section; belongs to the enoyl-CoA hydratase/isomerase family. In the C-terminal section; belongs to the 3-hydroxyacyl-CoA dehydrogenase family. In terms of assembly, heterotetramer of two alpha chains (FadB) and two beta chains (FadA).

The enzyme catalyses a (3S)-3-hydroxyacyl-CoA + NAD(+) = a 3-oxoacyl-CoA + NADH + H(+). The catalysed reaction is a (3S)-3-hydroxyacyl-CoA = a (2E)-enoyl-CoA + H2O. It carries out the reaction a 4-saturated-(3S)-3-hydroxyacyl-CoA = a (3E)-enoyl-CoA + H2O. It catalyses the reaction (3S)-3-hydroxybutanoyl-CoA = (3R)-3-hydroxybutanoyl-CoA. The enzyme catalyses a (3Z)-enoyl-CoA = a 4-saturated (2E)-enoyl-CoA. The catalysed reaction is a (3E)-enoyl-CoA = a 4-saturated (2E)-enoyl-CoA. Its pathway is lipid metabolism; fatty acid beta-oxidation. Involved in the aerobic and anaerobic degradation of long-chain fatty acids via beta-oxidation cycle. Catalyzes the formation of 3-oxoacyl-CoA from enoyl-CoA via L-3-hydroxyacyl-CoA. It can also use D-3-hydroxyacyl-CoA and cis-3-enoyl-CoA as substrate. The chain is Fatty acid oxidation complex subunit alpha from Pseudomonas putida (strain ATCC 47054 / DSM 6125 / CFBP 8728 / NCIMB 11950 / KT2440).